The following is a 114-amino-acid chain: uncharacterized protein (114 aa).

2 disordered regions span residues 26–45 (GMKQ…DALG) and 72–98 (PKGS…SVQA).

This is an uncharacterized protein from Homo sapiens (Human).